We begin with the raw amino-acid sequence, 375 residues long: Growth/differentiation factor 8 (375 aa).

Residues 1 to 23 (MQKLAVYVYIYLFMQIAVDPVAL) form the signal peptide. The propeptide occupies 24 to 266 (DGSSQPTENA…VTDTPKRSRR (243 aa)). N-linked (GlcNAc...) asparagine glycosylation is present at N71. Disulfide bonds link C272–C282, C281–C340, C309–C372, and C313–C374.

This sequence belongs to the TGF-beta family. Homodimer; disulfide-linked.

It is found in the secreted. In terms of biological role, acts specifically as a negative regulator of skeletal muscle growth. This chain is Growth/differentiation factor 8 (MSTN), found in Gallus gallus (Chicken).